The primary structure comprises 582 residues: Aspartate--tRNA ligase (582 aa).

Glu174 serves as a coordination point for L-aspartate. The tract at residues 198–201 is aspartate; it reads QITK. Arg220 contacts L-aspartate. ATP contacts are provided by residues 220 to 222 and Gln229; that span reads RDE. His443 is a binding site for L-aspartate. Residue Glu477 coordinates ATP. Arg484 contacts L-aspartate. 529-532 contributes to the ATP binding site; it reads GLDR.

The protein belongs to the class-II aminoacyl-tRNA synthetase family. Type 1 subfamily. Homodimer.

It is found in the cytoplasm. It catalyses the reaction tRNA(Asp) + L-aspartate + ATP = L-aspartyl-tRNA(Asp) + AMP + diphosphate. Functionally, catalyzes the attachment of L-aspartate to tRNA(Asp) in a two-step reaction: L-aspartate is first activated by ATP to form Asp-AMP and then transferred to the acceptor end of tRNA(Asp). This is Aspartate--tRNA ligase from Streptococcus pyogenes serotype M6 (strain ATCC BAA-946 / MGAS10394).